A 209-amino-acid chain; its full sequence is Uracil phosphoribosyltransferase (209 aa).

Residues R79, R104, and 131-139 contribute to the 5-phospho-alpha-D-ribose 1-diphosphate site; that span reads DPMLATGGS. Uracil is bound by residues I194 and 199–201; that span reads GDA. Position 200 (D200) interacts with 5-phospho-alpha-D-ribose 1-diphosphate.

The protein belongs to the UPRTase family. Requires Mg(2+) as cofactor.

It carries out the reaction UMP + diphosphate = 5-phospho-alpha-D-ribose 1-diphosphate + uracil. Its pathway is pyrimidine metabolism; UMP biosynthesis via salvage pathway; UMP from uracil: step 1/1. Allosterically activated by GTP. Functionally, catalyzes the conversion of uracil and 5-phospho-alpha-D-ribose 1-diphosphate (PRPP) to UMP and diphosphate. The polypeptide is Uracil phosphoribosyltransferase (Clostridium botulinum (strain Alaska E43 / Type E3)).